The chain runs to 223 residues: UPF0441 protein YgiB (223 aa).

Positions 178-195 are enriched in low complexity; the sequence is TVPKTAMAPKPATTTTVT. Positions 178 to 223 are disordered; the sequence is TVPKTAMAPKPATTTTVTRGGFGESVAKQSTMQRSATGTSSRSMGG. Positions 204 to 223 are enriched in polar residues; the sequence is AKQSTMQRSATGTSSRSMGG.

The protein belongs to the UPF0441 family.

The sequence is that of UPF0441 protein YgiB from Shigella dysenteriae serotype 1 (strain Sd197).